The following is a 329-amino-acid chain: Aspartate--ammonia ligase (329 aa).

Belongs to the class-II aminoacyl-tRNA synthetase family. AsnA subfamily.

The protein localises to the cytoplasm. The enzyme catalyses L-aspartate + NH4(+) + ATP = L-asparagine + AMP + diphosphate + H(+). It participates in amino-acid biosynthesis; L-asparagine biosynthesis; L-asparagine from L-aspartate (ammonia route): step 1/1. The protein is Aspartate--ammonia ligase of Ureaplasma urealyticum serovar 10 (strain ATCC 33699 / Western).